The sequence spans 434 residues: uncharacterized protein (434 aa).

Lys-216 carries the post-translational modification N6-(pyridoxal phosphate)lysine.

This is an uncharacterized protein from Schizosaccharomyces pombe (strain 972 / ATCC 24843) (Fission yeast).